The chain runs to 745 residues: MSLITRLLTGNNTLRLRALESLGKAGYSSHAKFSEHKPIERIRNIGISAHIDSGKTTLTERILFYTGRIAEMHEVRGKDNVGATMDSMELERQRGITIQSAATYTLWKDTNINIIDTPGHVDFTVEVERALRVLDGAVLVLCAVGGVQSQTLTVNRQMKRYNVPCLAFINKLDRLGSNPYRVLSQMRSKMNHNAAFIQLPIGVESNCKGIVDLVREKAIYFEGEHGMDIRLDEIPQDMRVESLERRQELIEHLSNADETLGELFLEEKPFTEDDIKAALRRTCINRTFTPVLVGTALKNKGVQPLLDAVLDYLPNPGEVENLGFIEKEGQDPEKVVLNPARDGKDPFVGLAFKLEAGRFGQLTYLRCYQGVLRKGDNIFNARTNKKVRIARLVRLHSNQMEDVNEVYAGDIFALFGVDCASGDTFTTNPKNNLSMESIFVPEPVVSMAIKPNNTKDRDNFSKAIARFTKEDPTFHFFFDNDVKETLVSGMGELHLEIYAQRMEREYGCPVTLGKPKVAFRETLVGPCEFDYLHKKQSGGSGQYARIIGVMEPLPPNQNTLLEFVDETVGTNVPKQFVPGVEKGYREMAEKGMLSGHKLSGIRFRLQDGGHHIVDSSELAFMLAAHGAIKEVFQNGSWQILEPIMLVEVTAPEEFQGAVMGHLSKRHGIITGTEGTEGWFTVYAEVPLNDMFGYAGELRSSTQGKGEFTMEYSRYSPCLPDVQDQIVRQYQESQGLAQPDKKKKKN.

The 278-residue stretch at 40–317 folds into the tr-type G domain; it reads ERIRNIGISA…AVLDYLPNPG (278 aa). GTP is bound by residues 49–56, 116–120, and 170–173; these read AHIDSGKT, DTPGH, and NKLD.

The protein belongs to the TRAFAC class translation factor GTPase superfamily. Classic translation factor GTPase family. EF-G/EF-2 subfamily.

Its subcellular location is the mitochondrion. The protein operates within protein biosynthesis; polypeptide chain elongation. Mitochondrial GTPase that catalyzes the GTP-dependent ribosomal translocation step during translation elongation. During this step, the ribosome changes from the pre-translocational (PRE) to the post-translocational (POST) state as the newly formed A-site-bound peptidyl-tRNA and P-site-bound deacylated tRNA move to the P and E sites, respectively. Catalyzes the coordinated movement of the two tRNA molecules, the mRNA and conformational changes in the ribosome. Essential during development as it acts as a retrograde signal from mitochondria to the nucleus to slow down cell proliferation if mitochondrial energy output is low. The chain is Elongation factor G, mitochondrial from Drosophila sechellia (Fruit fly).